Reading from the N-terminus, the 113-residue chain is Ig heavy chain V-III region E109 (113 aa).

Residues 1–113 (EVKLEESGGG…YWGQGTLVTV (113 aa)) enclose the Ig-like domain. A disulfide bond links cysteine 22 and cysteine 98.

The protein is Ig heavy chain V-III region E109 of Mus musculus (Mouse).